The primary structure comprises 121 residues: Large ribosomal subunit protein uL14c (121 aa).

This sequence belongs to the universal ribosomal protein uL14 family. As to quaternary structure, part of the 50S ribosomal subunit.

The protein localises to the plastid. It is found in the organellar chromatophore. In terms of biological role, binds to 23S rRNA. This Paulinella chromatophora protein is Large ribosomal subunit protein uL14c.